The primary structure comprises 695 residues: Adhesion G protein-coupled receptor F4 (695 aa).

The N-terminal stretch at 1 to 21 (MKMKSQATMICCLVFFLSTEC) is a signal peptide. The Extracellular portion of the chain corresponds to 22-406 (SHYRSKIHLK…TDKVLDYITC (385 aa)). 12 N-linked (GlcNAc...) asparagine glycosylation sites follow: Asn-61, Asn-169, Asn-177, Asn-209, Asn-229, Asn-250, Asn-257, Asn-263, Asn-264, Asn-286, Asn-309, and Asn-340. In terms of domain architecture, GAIN-B spans 249–397 (HNTSEKSLNF…SILMSSKSMT (149 aa)). Disulfide bonds link Cys-349/Cys-376 and Cys-364/Cys-378. The GPS stretch occupies residues 349–397 (CVGWHSKKRRWDEKACQMMLDIRNEVKCRCNYTSVVMSFSILMSSKSMT). Asn-379 is a glycosylation site (N-linked (GlcNAc...) asparagine). The chain crosses the membrane as a helical span at residues 407 to 427 (IGLSVSILSLVLCLIIEATVW). Residues 428 to 440 (SRVVVTEISYMRH) are Cytoplasmic-facing. Residues 441 to 461 (VCIVNIAVSLLTANVWFIIGS) form a helical membrane-spanning segment. Topologically, residues 462–485 (HFNIKAQDYNMCVAVTFFSHFFYL) are extracellular. The chain crosses the membrane as a helical span at residues 486-506 (SLFFWMLFKALLIIYGILVIF). The Cytoplasmic segment spans residues 507–515 (RRMMKSRMM). The helical transmembrane segment at 516 to 536 (VIGFAIGYGCPLIIAVTTVAI) threads the bilayer. Residues 537-561 (TEPEKGYMRPEACWLNWDNTKALLA) lie on the Extracellular side of the membrane. A helical membrane pass occupies residues 562-582 (FAIPAFVIVAVNLIVVLVVAV). The Cytoplasmic portion of the chain corresponds to 583–606 (NTQRPSIGSSKSQDVVIIMRISKN). A helical membrane pass occupies residues 607–627 (VAILTPLLGLTWGFGIATLIE). Topologically, residues 628–634 (GTSLTFH) are extracellular. The chain crosses the membrane as a helical span at residues 635 to 655 (IIFALLNAFQGFFILLFGTIM). Residues 656–695 (DHKIRDALRMRMSSLKGKSRAAENASLGPTNGSKLMNRQG) are Cytoplasmic-facing. The segment at 674-695 (SRAAENASLGPTNGSKLMNRQG) is disordered. Over residues 682-695 (LGPTNGSKLMNRQG) the composition is skewed to polar residues.

The protein belongs to the G-protein coupled receptor 2 family. Adhesion G-protein coupled receptor (ADGR) subfamily.

It is found in the membrane. Its function is as follows. Orphan receptor. The protein is Adhesion G protein-coupled receptor F4 (ADGRF4) of Homo sapiens (Human).